Reading from the N-terminus, the 1246-residue chain is HMG2-induced ER-remodeling protein 1 (1246 aa).

3 disordered regions span residues 19–241 (KGKR…GSLT), 263–288 (HHIQ…LPPI), and 816–836 (MPDA…KDEK). Residues 27-41 (KSAASTRTSEATTTS) show a composition bias toward low complexity. A compositionally biased stretch (polar residues) spans 58 to 95 (TIASPQRPLSGQNVNNELSNSKPAVSAEKVSQQGQVPT). S102 carries the post-translational modification Phosphoserine. At T128 the chain carries Phosphothreonine. 2 stretches are compositionally biased toward low complexity: residues 154-163 (RSSSISTSLN) and 211-230 (SKIS…PSSS). Residues 271-282 (SGREQDSPHSES) are compositionally biased toward basic and acidic residues. S277 bears the Phosphoserine mark. A Phosphoserine modification is found at S1013. 2 stretches are compositionally biased toward polar residues: residues 1109–1133 (SSRH…TPDS) and 1200–1215 (SRSP…QQKA). Disordered regions lie at residues 1109-1157 (SSRH…LPKI) and 1192-1224 (SLYG…LVED). T1130 is subject to Phosphothreonine. Residues S1200, S1204, and S1207 each carry the phosphoserine modification.

Belongs to the GIP3/HER1 family. May interact with ribosomes.

The protein localises to the cytoplasm. Required for HMG2-induced endoplasmic reticulum-remodeling. The chain is HMG2-induced ER-remodeling protein 1 (HER1) from Saccharomyces cerevisiae (strain ATCC 204508 / S288c) (Baker's yeast).